Reading from the N-terminus, the 141-residue chain is D-aminoacyl-tRNA deacylase (141 aa).

A Gly-cisPro motif, important for rejection of L-amino acids motif is present at residues 133 to 134; sequence GP.

This sequence belongs to the DTD family. As to quaternary structure, homodimer.

The protein resides in the cytoplasm. The enzyme catalyses glycyl-tRNA(Ala) + H2O = tRNA(Ala) + glycine + H(+). It carries out the reaction a D-aminoacyl-tRNA + H2O = a tRNA + a D-alpha-amino acid + H(+). An aminoacyl-tRNA editing enzyme that deacylates mischarged D-aminoacyl-tRNAs. Also deacylates mischarged glycyl-tRNA(Ala), protecting cells against glycine mischarging by AlaRS. Acts via tRNA-based rather than protein-based catalysis; rejects L-amino acids rather than detecting D-amino acids in the active site. By recycling D-aminoacyl-tRNA to D-amino acids and free tRNA molecules, this enzyme counteracts the toxicity associated with the formation of D-aminoacyl-tRNA entities in vivo and helps enforce protein L-homochirality. This chain is D-aminoacyl-tRNA deacylase, found in Beutenbergia cavernae (strain ATCC BAA-8 / DSM 12333 / CCUG 43141 / JCM 11478 / NBRC 16432 / NCIMB 13614 / HKI 0122).